The primary structure comprises 210 residues: Endo-1,4-beta-xylanase A (210 aa).

Residues 1 to 19 (MKLKKKMLTLLLTASMSFG) form the signal peptide. Residues 20 to 210 (LFGATSSAAT…SSGRSNVTVW (191 aa)) form the GH11 domain. E104 acts as the Nucleophile in catalysis. The active-site Proton donor is E197.

Belongs to the glycosyl hydrolase 11 (cellulase G) family.

The enzyme catalyses Endohydrolysis of (1-&gt;4)-beta-D-xylosidic linkages in xylans.. Its pathway is glycan degradation; xylan degradation. The sequence is that of Endo-1,4-beta-xylanase A (xynA) from Geobacillus stearothermophilus (Bacillus stearothermophilus).